A 908-amino-acid chain; its full sequence is Flap endonuclease GEN homolog 1 (908 aa).

Positions 2-96 (GVNDLWQILE…SKRNQSRYGS (95 aa)) are XPG-N domain. 7 residues coordinate Mg(2+): D30, E75, E134, E136, D155, D157, and D208. An XPG-I domain region spans residues 122 to 208 (ECLGIPWVQA…VGLAILLGCD (87 aa)). Residues 208–384 (DYLPKGVPGV…LLVLLTHYDM (177 aa)) are 5'-3' exonuclease domain. The interval 390 to 464 (GSRNSNQLQP…VYQKQKLEIK (75 aa)) is chromodomain. Phosphoserine occurs at positions 801 and 802.

It belongs to the XPG/RAD2 endonuclease family. GEN subfamily. As to quaternary structure, largely monomeric, dimerizes on the Holliday junction and the first nick occurs upon dimerization at the junction. The cofactor is Mg(2+).

Its subcellular location is the nucleus. Its function is as follows. Endonuclease which resolves Holliday junctions (HJs) by the introduction of symmetrically related cuts across the junction point, to produce nicked duplex products in which the nicks can be readily ligated. Four-way DNA intermediates, also known as Holliday junctions, are formed during homologous recombination and DNA repair, and their resolution is necessary for proper chromosome segregation. Cleaves HJs by a nick and counter-nick mechanism involving dual coordinated incisions that lead to the formation of ligatable nicked duplex products. Cleavage of the first strand is rate limiting, while second strand cleavage is rapid. Largely monomeric, dimerizes on the HJ and the first nick occurs upon dimerization at the junction. Efficiently cleaves both single and double HJs contained within large recombination intermediates. Exhibits a weak sequence preference for incision between two G residues that reside in a T-rich region of DNA. Also has endonuclease activity on 5'-flap and replication fork (RF) DNA substrates. This chain is Flap endonuclease GEN homolog 1 (GEN1), found in Homo sapiens (Human).